The sequence spans 602 residues: MFPAQDALPRSGLNLKEEPLLPAGLGSVRSWMQGAGILDASTAAQSGVGLARAHFEKQPPSNLRKSNFFHFVLAMYDRQGQPVEVERTAFIDFVEKDREPGAEKTNNGIHYRLRLVYNNGLRTEQDLYVRLIDSMSKQAIIYEGQDKNPEMCRVLLTHEIMCSRCCDRKSCGNRNETPSDPVIIDRFFLKFFLKCNQNCLKNAGNPRDMRRFQVVVSTTVSVDGHVLAVSDNMFVHNNSKHGRRARRLDPSEAATPCIKAISPGEGWTTGGATVIVIGDNFFDGLQVVFGNVLVWSELITPHAIRVQTPPRHIPGVVEVTLSYKSKQFCKGCPGRFVYTALNEPTIDYGFQRLQKVIPRHPGDPERLPKEVLLKRAADLAEALYGVPGSNQELLLKRAADVAEALYSTPRAPGPLAPLAPSHPHPAVVGINAFSSPLAIAVGDATPGPEPGYARSCSSASPRGFAPSPGSQQSGYGGGLGAGLGGYGAPGVAGLGVPGSPSFLNGSTATSPFAIMPSSPPLAAASSMSLPAAAPTTSVFSFSPVNMISAVKQRSAFAPVLRPPSSPPQACPRAHGEGLPDQSFEDSDKFHSPARGLQGLAYS.

Residues 64 to 67 (RKSN) are interaction with DNA. The C5-type zinc finger occupies 152–171 (CRVLLTHEIMCSRCCDRKSC). Interaction with DNA stretches follow at residues 198–205 (NCLKNAGN) and 237–240 (NNSK). An IPT/TIG domain is found at 256-338 (PCIKAISPGE…CKGCPGRFVY (83 aa)). Disordered stretches follow at residues 448 to 476 (PEPGYARSCSSASPRGFAPSPGSQQSGYG) and 558 to 602 (PVLR…LAYS). The span at 560-569 (LRPPSSPPQA) shows a compositional bias: pro residues.

It belongs to the COE family. In terms of assembly, forms either a homodimer or a heterodimer with a related family member. Interacts with MAPK3/ERK1. Interacts with STAT5A. Most highly expressed in cytotoxic NK cells, especially CD16(+) NK cells, followed by CD8(+) T-cells.

Its subcellular location is the nucleus. Transcription factor. Binds to specific sequence motif 5'-CCCNNG[GA]G-3' in regulatory elements of putative target immunoregulatory genes such as NKG7, GZMA, and TBX21. Positively modulates transcription of NKG7. May play a role in regulating FAS/CD95-mediated apoptosis in cytotoxic NK cells and T-cells, probably downstream of interleukin IL2 signaling. The protein is Transcription factor COE4 (EBF4) of Homo sapiens (Human).